A 153-amino-acid chain; its full sequence is Ubiquitin-conjugating enzyme E2 35 (153 aa).

The UBC core domain occupies 5–151 (NLPRRIIKET…AKEWTRLYAS (147 aa)). The Glycyl thioester intermediate role is filled by Cys89.

It belongs to the ubiquitin-conjugating enzyme family. Interacts with yeast and human Mms2, with the RING domain of RGLG2 and with UEV1A, UEV1B, UEV1C and UEV1D. In terms of tissue distribution, ubiquitously expressed at low level. Mainly expressed in the vasculature.

The enzyme catalyses S-ubiquitinyl-[E1 ubiquitin-activating enzyme]-L-cysteine + [E2 ubiquitin-conjugating enzyme]-L-cysteine = [E1 ubiquitin-activating enzyme]-L-cysteine + S-ubiquitinyl-[E2 ubiquitin-conjugating enzyme]-L-cysteine.. It functions in the pathway protein modification; protein ubiquitination. Functionally, catalyzes the synthesis of non-canonical poly-ubiquitin chains that are linked through 'Lys-63'. This type of poly-ubiquitination does not lead to protein degradation by the proteasome. Mediates transcriptional activation of target genes. Required for postreplication repair of UV-damaged DNA and for adapting root developmental programs to suboptimal availability of iron. The sequence is that of Ubiquitin-conjugating enzyme E2 35 (UBC35) from Arabidopsis thaliana (Mouse-ear cress).